The sequence spans 326 residues: Mitochondrial glycine transporter (326 aa).

Solcar repeat units lie at residues 45 to 134 (HPVI…SKQY), 141 to 225 (PTAL…TRAT), and 237 to 321 (LMPL…MMAK). Helical transmembrane passes span 51-76 (FLCG…TRLQ), 109-135 (GMSP…KQYF), 147-172 (VILG…TRYE), 200-223 (GLTA…SQTR), 241-267 (VNFS…KTHM), and 296-314 (GSVP…AWTV).

Belongs to the mitochondrial carrier (TC 2.A.29) family. SLC25A38 subfamily.

The protein localises to the mitochondrion inner membrane. It carries out the reaction glycine(in) = glycine(out). In terms of biological role, mitochondrial glycine transporter that imports glycine into the mitochondrial matrix. Plays an important role in providing glycine for the first enzymatic step in heme biosynthesis, the condensation of glycine with succinyl-CoA to produce 5-aminolevulinate (ALA) in the mitochondrial matrix. Required during erythropoiesis. Plays a role as pro-apoptotic protein that induces caspase-dependent apoptosis. This is Mitochondrial glycine transporter from Rattus norvegicus (Rat).